The following is a 395-amino-acid chain: Transmembrane protein 79 (395 aa).

The disordered stretch occupies residues 1–115 (MTEPETLALL…PPTKLEELPE (115 aa)). The Cytoplasmic segment spans residues 1 to 204 (MTEPETLALL…GREALRAVAS (204 aa)). A helical transmembrane segment spans residues 205-225 (VGAALILFPCLLYGAYAFLPF). Residues 226–244 (DAPRLPTMSSRLIYTLRCG) lie on the Extracellular side of the membrane. Residues 245-265 (VFATFPIVLGILVYGLSLLCF) traverse the membrane as a helical segment. Topologically, residues 266-290 (AALRPFGEPRREVEIHRQYVAQSVQ) are cytoplasmic. Residues 291–311 (LFILYFFNLAVLSTYLPQDAL) traverse the membrane as a helical segment. Residues 312-313 (KL) lie on the Extracellular side of the membrane. A helical membrane pass occupies residues 314–334 (LPLLTGLFAISRLIYWLTFAV). Topologically, residues 335–343 (GRSFRGFGY) are cytoplasmic. A helical membrane pass occupies residues 344-364 (GLTFLPLLSMLLWNFYYMFVV). At 365-395 (EPERMLTASESRLDYPDHARSASDYRPRSRG) the chain is on the extracellular side.

The protein resides in the lysosome. It localises to the golgi apparatus. Its subcellular location is the trans-Golgi network. It is found in the membrane. Functionally, contributes to the epidermal integrity and skin barrier function. Plays a role in the lamellar granule (LG) secretory system and in the stratum corneum (SC) epithelial cell formation. This chain is Transmembrane protein 79 (TMEM79), found in Bos taurus (Bovine).